A 422-amino-acid chain; its full sequence is DNA (cytosine-5)-methyltransferase 3-like (422 aa).

Over residues 1–11 the composition is skewed to polar residues; that stretch reads MGSRETPSSCS. The disordered stretch occupies residues 1–50; it reads MGSRETPSSCSKTHETLNLETPESSSTDPDSPLEEQWPKSAPDLKEEDSM. The segment covering 20-30 has biased composition (low complexity); sequence ETPESSSTDPD. The ADD domain maps to 76 to 208; it reads EVNVNQRNIE…LKAFHDREGA (133 aa). Residues 87-117 form a GATA-type; atypical zinc finger; sequence ICLCCGSLQVYAQHPLFEGGICAPCKDKFLE. The segment at 128–184 adopts a PHD-type; atypical zinc-finger fold; the sequence is QSYCTICCSGHTLFICESPDCTRCYCFECVDILVGPGTSERINAMACWVCFLCLPFS.

Homodimer. Heterotetramer composed of 1 DNMT3A homodimer and 2 DNMT3L subunits (DNMT3L-DNMT3A-DNMT3A-DNMT3L). Interacts with histone H3 (via N-terminus); interaction is strongly inhibited by methylation at lysine 4 (H3K4me). Interacts with EZH2; the interaction is direct. Interacts with SPOCD1.

It localises to the nucleus. Its function is as follows. Catalytically inactive regulatory factor of DNA methyltransferases that can either promote or inhibit DNA methylation depending on the context. Essential for the function of DNMT3A and DNMT3B: activates DNMT3A and DNMT3B by binding to their catalytic domain. Acts by accelerating the binding of DNA and S-adenosyl-L-methionine (AdoMet) to the methyltransferases and dissociates from the complex after DNA binding to the methyltransferases. Recognizes unmethylated histone H3 lysine 4 (H3K4me0) and induces de novo DNA methylation by recruitment or activation of DNMT3. Plays a key role in embryonic stem cells and germ cells. In germ cells, required for the methylation of imprinted loci together with DNMT3A. In male germ cells, specifically required to methylate retrotransposons, preventing their mobilization. Plays a key role in embryonic stem cells (ESCs) by acting both as an positive and negative regulator of DNA methylation. While it promotes DNA methylation of housekeeping genes together with DNMT3A and DNMT3B, it also acts as an inhibitor of DNA methylation at the promoter of bivalent genes. Interacts with the EZH2 component of the PRC2/EED-EZH2 complex, preventing interaction of DNMT3A and DNMT3B with the PRC2/EED-EZH2 complex, leading to maintain low methylation levels at the promoters of bivalent genes. Promotes differentiation of ESCs into primordial germ cells by inhibiting DNA methylation at the promoter of RHOX5, thereby activating its expression. This Rattus norvegicus (Rat) protein is DNA (cytosine-5)-methyltransferase 3-like (Dnmt3l).